A 75-amino-acid polypeptide reads, in one-letter code: DNA-directed RNA polymerase subunit omega (75 aa).

It belongs to the RNA polymerase subunit omega family. In cyanobacteria the RNAP catalytic core is composed of 2 alpha, 1 beta, 1 beta', 1 gamma and 1 omega subunit. When a sigma factor is associated with the core the holoenzyme is formed, which can initiate transcription.

The catalysed reaction is RNA(n) + a ribonucleoside 5'-triphosphate = RNA(n+1) + diphosphate. Functionally, promotes RNA polymerase assembly. Latches the N- and C-terminal regions of the beta' subunit thereby facilitating its interaction with the beta and alpha subunits. The polypeptide is DNA-directed RNA polymerase subunit omega (Prochlorococcus marinus (strain MIT 9211)).